The primary structure comprises 569 residues: Urease subunit alpha (569 aa).

Residues histidine 136, histidine 138, and lysine 219 each contribute to the Ni(2+) site. Lysine 219 is modified (N6-carboxylysine). Histidine 221 serves as a coordination point for substrate. Histidine 248 and histidine 274 together coordinate Ni(2+). Histidine 322 serves as the catalytic Proton donor. Ni(2+) is bound at residue aspartate 362.

Belongs to the metallo-dependent hydrolases superfamily. Urease alpha subunit family. As to quaternary structure, heterotrimer of UreA (gamma), UreB (beta) and UreC (alpha) subunits. Three heterotrimers associate to form the active enzyme. It depends on Ni cation as a cofactor. Carboxylation allows a single lysine to coordinate two nickel ions.

It is found in the cytoplasm. The enzyme catalyses urea + 2 H2O + H(+) = hydrogencarbonate + 2 NH4(+). It participates in nitrogen metabolism; urea degradation; CO(2) and NH(3) from urea (urease route): step 1/1. The protein is Urease subunit alpha of Microcystis aeruginosa (strain NIES-843 / IAM M-2473).